The chain runs to 1076 residues: Carbamoyl phosphate synthase large chain (1076 aa).

Residues methionine 1–glutamate 402 are carboxyphosphate synthetic domain. 12 residues coordinate ATP: arginine 129, arginine 169, glycine 175, glycine 176, glutamate 208, valine 210, glutamate 215, glycine 241, valine 242, histidine 243, glutamine 285, and glutamate 299. One can recognise an ATP-grasp 1 domain in the interval lysine 133–valine 328. Mg(2+)-binding residues include glutamine 285, glutamate 299, and asparagine 301. 3 residues coordinate Mn(2+): glutamine 285, glutamate 299, and asparagine 301. The tract at residues isoleucine 403–alanine 555 is oligomerization domain. Residues leucine 556 to lysine 939 form a carbamoyl phosphate synthetic domain region. The 192-residue stretch at alanine 680–methionine 871 folds into the ATP-grasp 2 domain. Residues arginine 716, lysine 755, leucine 757, glutamate 762, glycine 787, valine 788, histidine 789, serine 790, glutamine 830, and glutamate 842 each coordinate ATP. The Mg(2+) site is built by glutamine 830, glutamate 842, and asparagine 844. Glutamine 830, glutamate 842, and asparagine 844 together coordinate Mn(2+). Residues methionine 938–serine 1076 enclose the MGS-like domain. Positions leucine 940 to serine 1076 are allosteric domain.

Belongs to the CarB family. As to quaternary structure, composed of two chains; the small (or glutamine) chain promotes the hydrolysis of glutamine to ammonia, which is used by the large (or ammonia) chain to synthesize carbamoyl phosphate. Tetramer of heterodimers (alpha,beta)4. Mg(2+) is required as a cofactor. The cofactor is Mn(2+).

It catalyses the reaction hydrogencarbonate + L-glutamine + 2 ATP + H2O = carbamoyl phosphate + L-glutamate + 2 ADP + phosphate + 2 H(+). The catalysed reaction is hydrogencarbonate + NH4(+) + 2 ATP = carbamoyl phosphate + 2 ADP + phosphate + 2 H(+). It participates in amino-acid biosynthesis; L-arginine biosynthesis; carbamoyl phosphate from bicarbonate: step 1/1. The protein operates within pyrimidine metabolism; UMP biosynthesis via de novo pathway; (S)-dihydroorotate from bicarbonate: step 1/3. In terms of biological role, large subunit of the glutamine-dependent carbamoyl phosphate synthetase (CPSase). CPSase catalyzes the formation of carbamoyl phosphate from the ammonia moiety of glutamine, carbonate, and phosphate donated by ATP, constituting the first step of 2 biosynthetic pathways, one leading to arginine and/or urea and the other to pyrimidine nucleotides. The large subunit (synthetase) binds the substrates ammonia (free or transferred from glutamine from the small subunit), hydrogencarbonate and ATP and carries out an ATP-coupled ligase reaction, activating hydrogencarbonate by forming carboxy phosphate which reacts with ammonia to form carbamoyl phosphate. The polypeptide is Carbamoyl phosphate synthase large chain (Archaeoglobus fulgidus (strain ATCC 49558 / DSM 4304 / JCM 9628 / NBRC 100126 / VC-16)).